The following is a 397-amino-acid chain: Mesoderm posterior protein 2 (397 aa).

Disordered stretches follow at residues 28-92, 152-208, 222-295, and 351-376; these read WDST…REKL, QRGD…GRRP, SPSA…VPWT, and PNSEDQGPGAAFQLSEASPPQSSGLR. 2 stretches are compositionally biased toward low complexity: residues 32 to 48 and 58 to 71; these read SPASSSDSSGSCPCDGA and SCSSRAAEAAATTP. The bHLH domain maps to 81-135; that stretch reads GQRQSASEREKLRMRTLARALHELRRFLPPSLAPAGQSLTKIETLRLAIRYIGHL. 13 tandem repeats follow at residues 179 to 180, 181 to 182, 183 to 184, 185 to 186, 187 to 188, 189 to 190, 191 to 192, 193 to 194, 195 to 196, 197 to 198, 199 to 200, 201 to 202, and 203 to 204. Residues 179-204 form a 13 X 2 AA tandem repeats of G-Q region; it reads GQGQGQGQGQGQGQGQGQGQGQGQGQ. Over residues 180–206 the composition is skewed to gly residues; sequence QGQGQGQGQGQGQGQGQGQGQGQGQGR. The segment covering 235–244 has biased composition (basic and acidic residues); the sequence is RLGRGVHDTD. Polar residues-rich tracts occupy residues 258 to 270 and 365 to 375; these read PPYSSQGTTSDAS and SEASPPQSSGL.

Post-translationally, degraded by the proteasome.

Its subcellular location is the nucleus. Its function is as follows. Transcription factor with important role in somitogenesis. Defines the rostrocaudal patterning of the somite by participating in distinct Notch pathways. Also regulates the FGF signaling pathway. Specifies the rostral half of the somites. Generates rostro-caudal polarity of somites by down-regulating in the presumptive rostral domain DLL1, a Notch ligand. Participates in the segment border formation by activating in the anterior presomitic mesoderm LFNG, a negative regulator of DLL1-Notch signaling. Acts as a strong suppressor of Notch activity. Together with MESP1 is involved in the epithelialization of somitic mesoderm and in the development of cardiac mesoderm. This Homo sapiens (Human) protein is Mesoderm posterior protein 2 (MESP2).